Reading from the N-terminus, the 91-residue chain is uncharacterized protein (91 aa).

An Integrase catalytic domain is found at Met-1 to Ile-91.

This is an uncharacterized protein from Haemophilus influenzae (strain ATCC 51907 / DSM 11121 / KW20 / Rd).